Reading from the N-terminus, the 2079-residue chain is Non-reducing polyketide synthase Dhc5 (2079 aa).

The segment at 9 to 246 (LLFGDVTDPW…DELNIHALQH (238 aa)) is N-terminal acylcarrier protein transacylase domain (SAT). In terms of domain architecture, Ketosynthase family 3 (KS3) spans 366–798 (NDGIAIVGMA…GGNACLLLED (433 aa)). Active-site for beta-ketoacyl synthase activity residues include C543, H678, and H717. The malonyl-CoA:ACP transacylase (MAT) domain stretch occupies residues 895–1199 (VFVFTGQGSH…MTHSLQPKTS (305 aa)). The active-site For acyl/malonyl transferase activity is the S986. Residues 1268–1414 (EPLISTCAQY…DPTRSQVEWD (147 aa)) are N-terminal hotdog fold. Residues 1268 to 1584 (EPLISTCAQY…YQELPRATWK (317 aa)) enclose the PKS/mFAS DH domain. Residues 1304 to 1581 (MDGHKMQGIG…DIRYQELPRA (278 aa)) are product template (PT) domain. Residues 1435–1584 (RGHRMQPEVF…YQELPRATWK (150 aa)) form a C-terminal hotdog fold region. The segment at 1613-1639 (RELQQPSSATVPAQETTIDEPEQQEGE) is disordered. The segment covering 1615-1628 (LQQPSSATVPAQET) has biased composition (polar residues). The Carrier domain occupies 1641–1718 (AAGARLFNAI…DLRKEFRANE (78 aa)). S1678 carries the post-translational modification O-(pantetheine 4'-phosphoryl)serine. Residues 1721-1784 (VENPRFSATP…EQKRPVKIDD (64 aa)) are disordered. Over residues 1727 to 1757 (SATPSSAEASIPSSPSSLAHPMSDSASSLSP) the composition is skewed to low complexity. Over residues 1758-1784 (SDREEALPLERQSMTKREQKRPVKIDD) the composition is skewed to basic and acidic residues. Positions 1812 to 2057 (ADGTGTIATY…LSVAGDHLDL (246 aa)) are thioesterase (TE) domain. H2064 acts as the For thioesterase activity in catalysis.

Its pathway is mycotoxin biosynthesis. Its function is as follows. Highly reducing polyketide synthase; part of the gene cluster that mediates the biosynthesis of 10,11-dehydrocurvularin, a prevalent fungal phytotoxin with heat shock response and immune-modulatory activities. The highly reducing polyketide synthase Dhc3 is responsible for biosynthesis up to the tetraketide stage. The non-reducing polyketide synthase Dhc5 then conducts four additional chain extension cycles, producing the unreduced part of the nascent octaketide from C-1 to C-8 in 10,11-dehydrocurvularin. The polypeptide is Non-reducing polyketide synthase Dhc5 (Alternaria cinerariae).